The primary structure comprises 443 residues: Methyl-coenzyme M reductase II subunit beta (443 aa).

Tyr-367 is a coenzyme M binding site. A coenzyme B-binding site is contributed by Gly-369.

This sequence belongs to the methyl-coenzyme M reductase beta subunit family. MCR is a hexamer of two alpha, two beta, and two gamma chains, forming a dimer of heterotrimers. It depends on coenzyme F430 as a cofactor.

The catalysed reaction is coenzyme B + methyl-coenzyme M = methane + coenzyme M-coenzyme B heterodisulfide. The protein operates within one-carbon metabolism; methyl-coenzyme M reduction; methane from methyl-coenzyme M: step 1/1. In terms of biological role, component of the methyl-coenzyme M reductase (MCR) I that catalyzes the reductive cleavage of methyl-coenzyme M (CoM-S-CH3 or 2-(methylthio)ethanesulfonate) using coenzyme B (CoB or 7-mercaptoheptanoylthreonine phosphate) as reductant which results in the production of methane and the mixed heterodisulfide of CoB and CoM (CoM-S-S-CoB). This is the final step in methanogenesis. The chain is Methyl-coenzyme M reductase II subunit beta (mrtB) from Methanothermus fervidus (strain ATCC 43054 / DSM 2088 / JCM 10308 / V24 S).